The primary structure comprises 245 residues: DNA repair protein RecO (245 aa).

It belongs to the RecO family.

Involved in DNA repair and RecF pathway recombination. This Pectobacterium atrosepticum (strain SCRI 1043 / ATCC BAA-672) (Erwinia carotovora subsp. atroseptica) protein is DNA repair protein RecO.